We begin with the raw amino-acid sequence, 235 residues long: Mediator of RNA polymerase II transcription subunit 29 (235 aa).

The segment covering 1 to 14 (MMNQMGMMMQQQGV) has biased composition (low complexity). The tract at residues 1-54 (MMNQMGMMMQQQGVGVPGGPGGVGGVGMPGPGGVGVAPGMMQSPQMQQAQQQQV) is disordered. Residues 15-36 (GVPGGPGGVGGVGMPGPGGVGV) are compositionally biased toward gly residues. Residues 37 to 54 (APGMMQSPQMQQAQQQQV) are compositionally biased toward low complexity.

It belongs to the Mediator complex subunit 29 family. Component of the Mediator complex.

The protein localises to the nucleus. Functionally, component of the Mediator complex, a coactivator involved in the regulated transcription of nearly all RNA polymerase II-dependent genes. Mediator functions as a bridge to convey information from gene-specific regulatory proteins to the basal RNA polymerase II transcription machinery. Mediator is recruited to promoters by direct interactions with regulatory proteins and serves as a scaffold for the assembly of a functional preinitiation complex with RNA polymerase II and the general transcription factors. This Anopheles gambiae (African malaria mosquito) protein is Mediator of RNA polymerase II transcription subunit 29 (ix).